The sequence spans 473 residues: Transposase for insertion sequence element IS1151 (473 aa).

This sequence belongs to the transposase 11 family.

Functionally, involved in the transposition of the insertion sequence. This is Transposase for insertion sequence element IS1151 (tnp) from Clostridium perfringens.